The primary structure comprises 379 residues: Alanine racemase (379 aa).

The active-site Proton acceptor; specific for D-alanine is the Lys37. Lys37 bears the N6-(pyridoxal phosphate)lysine mark. Arg137 contributes to the substrate binding site. Residue Tyr269 is the Proton acceptor; specific for L-alanine of the active site. Met317 lines the substrate pocket.

It belongs to the alanine racemase family. Requires pyridoxal 5'-phosphate as cofactor.

It carries out the reaction L-alanine = D-alanine. It functions in the pathway amino-acid biosynthesis; D-alanine biosynthesis; D-alanine from L-alanine: step 1/1. Catalyzes the interconversion of L-alanine and D-alanine. May also act on other amino acids. This Citrifermentans bemidjiense (strain ATCC BAA-1014 / DSM 16622 / JCM 12645 / Bem) (Geobacter bemidjiensis) protein is Alanine racemase (alr).